Consider the following 211-residue polypeptide: Histidine biosynthesis bifunctional protein HisIE (211 aa).

Residues 1–117 (MSTQTNTKSD…CWLDGNAHPF (117 aa)) form a phosphoribosyl-AMP cyclohydrolase region. The segment at 118-211 (LNNLAELIAS…LARHQKAQRK (94 aa)) is phosphoribosyl-ATP pyrophosphohydrolase.

In the N-terminal section; belongs to the PRA-CH family. This sequence in the C-terminal section; belongs to the PRA-PH family.

The protein resides in the cytoplasm. It carries out the reaction 1-(5-phospho-beta-D-ribosyl)-ATP + H2O = 1-(5-phospho-beta-D-ribosyl)-5'-AMP + diphosphate + H(+). The enzyme catalyses 1-(5-phospho-beta-D-ribosyl)-5'-AMP + H2O = 1-(5-phospho-beta-D-ribosyl)-5-[(5-phospho-beta-D-ribosylamino)methylideneamino]imidazole-4-carboxamide. It functions in the pathway amino-acid biosynthesis; L-histidine biosynthesis; L-histidine from 5-phospho-alpha-D-ribose 1-diphosphate: step 2/9. Its pathway is amino-acid biosynthesis; L-histidine biosynthesis; L-histidine from 5-phospho-alpha-D-ribose 1-diphosphate: step 3/9. This chain is Histidine biosynthesis bifunctional protein HisIE, found in Shewanella oneidensis (strain ATCC 700550 / JCM 31522 / CIP 106686 / LMG 19005 / NCIMB 14063 / MR-1).